Here is a 300-residue protein sequence, read N- to C-terminus: 7-methylguanosine phosphate-specific 5'-nucleotidase (300 aa).

Aspartate 41 serves as the catalytic Nucleophile. Mg(2+) contacts are provided by aspartate 41 and aspartate 43. The active-site Proton donor is the aspartate 43. Glutamate 88 serves as a coordination point for CMP. Glutamate 88 contacts N(7)-methyl-GMP. Substrate contacts are provided by residues 156-157 and lysine 205; that span reads SA. Aspartate 230 lines the Mg(2+) pocket. Lysine 256 carries the post-translational modification N6-acetyllysine.

The protein belongs to the pyrimidine 5'-nucleotidase family. Monomer.

Its subcellular location is the cytoplasm. It carries out the reaction N(7)-methyl-GMP + H2O = N(7)-methylguanosine + phosphate. The catalysed reaction is CMP + H2O = cytidine + phosphate. The enzyme catalyses a ribonucleoside 5'-phosphate + H2O = a ribonucleoside + phosphate. Functionally, specifically hydrolyzes 7-methylguanosine monophosphate (m(7)GMP) to 7-methylguanosine and inorganic phosphate. The specific activity for m(7)GMP may protect cells against undesired salvage of m(7)GMP and its incorporation into nucleic acids. Also has weak activity for CMP. UMP and purine nucleotides are poor substrates. This Mus musculus (Mouse) protein is 7-methylguanosine phosphate-specific 5'-nucleotidase (Nt5c3b).